Consider the following 282-residue polypeptide: Formamidopyrimidine-DNA glycosylase (282 aa).

Pro-2 functions as the Schiff-base intermediate with DNA in the catalytic mechanism. Glu-3 functions as the Proton donor in the catalytic mechanism. Lys-60 functions as the Proton donor; for beta-elimination activity in the catalytic mechanism. 3 residues coordinate DNA: His-99, Arg-118, and Lys-163. The FPG-type zinc finger occupies 248 to 282 (LVYRRSGKNCKKCGEKILREKICGRSTHWCPNCQK). The active-site Proton donor; for delta-elimination activity is Arg-272.

The protein belongs to the FPG family. In terms of assembly, monomer. The cofactor is Zn(2+).

It catalyses the reaction Hydrolysis of DNA containing ring-opened 7-methylguanine residues, releasing 2,6-diamino-4-hydroxy-5-(N-methyl)formamidopyrimidine.. The enzyme catalyses 2'-deoxyribonucleotide-(2'-deoxyribose 5'-phosphate)-2'-deoxyribonucleotide-DNA = a 3'-end 2'-deoxyribonucleotide-(2,3-dehydro-2,3-deoxyribose 5'-phosphate)-DNA + a 5'-end 5'-phospho-2'-deoxyribonucleoside-DNA + H(+). In terms of biological role, involved in base excision repair of DNA damaged by oxidation or by mutagenic agents. Acts as a DNA glycosylase that recognizes and removes damaged bases. Has a preference for oxidized purines, such as 7,8-dihydro-8-oxoguanine (8-oxoG). Has AP (apurinic/apyrimidinic) lyase activity and introduces nicks in the DNA strand. Cleaves the DNA backbone by beta-delta elimination to generate a single-strand break at the site of the removed base with both 3'- and 5'-phosphates. This Prochlorococcus marinus (strain NATL1A) protein is Formamidopyrimidine-DNA glycosylase.